The primary structure comprises 576 residues: Arginine--tRNA ligase (576 aa).

Residues 122–132 carry the 'HIGH' region motif; the sequence is PNVAKQMHVGH.

This sequence belongs to the class-I aminoacyl-tRNA synthetase family. As to quaternary structure, monomer.

It localises to the cytoplasm. It carries out the reaction tRNA(Arg) + L-arginine + ATP = L-arginyl-tRNA(Arg) + AMP + diphosphate. This Yersinia pestis bv. Antiqua (strain Antiqua) protein is Arginine--tRNA ligase.